The primary structure comprises 89 residues: Small ribosomal subunit protein uS17 (89 aa).

Belongs to the universal ribosomal protein uS17 family. As to quaternary structure, part of the 30S ribosomal subunit.

One of the primary rRNA binding proteins, it binds specifically to the 5'-end of 16S ribosomal RNA. In Chlorobium chlorochromatii (strain CaD3), this protein is Small ribosomal subunit protein uS17.